We begin with the raw amino-acid sequence, 478 residues long: MHPNVYIPEAFLEKIQTILPAHLNMEDFIASCQKPLRKSIRVNTLKISVEAFLERAEAKGWKLSPVPWCNTGFWIEADESVVPLGNTAEHMSGLFYIQEASSMMPVSALFMNDESYDAVLDTAAAPGSKTTQIAALMNNEGVLVANEYAASRVKVLHANIERCGVRNAALSNFDGRVFGGWLPEQFDAVLLDAPCSGEGTVRKDEDAMKNWTQSSVVEIADTQKDLIESAFHALKPGGVMVYSTCTLSTEENQQVCHHLKETFGDAVEFESLKDLFENAEAALTEEGFLHIFPQVYDCEGFFVARIRKLTAVEAPKVKKRMGKFPFSKASNKESAEIAKQLQNTMDIKVPEDSTVWIREKDVWLFPDALEPMIGELRFSRMGIKIAEAHKNGYRWQHQVATALATGDEKNAIELTIEEAREWYMGRDVRPQNIPADMKTGKGEVFVKYEGAIIGLGKWVSNRIKNGLPRELVRDKNLF.

S-adenosyl-L-methionine-binding positions include 123–129, glutamate 147, aspartate 174, and aspartate 192; that span reads AAAPGSK. Cysteine 245 functions as the Nucleophile in the catalytic mechanism.

The protein belongs to the class I-like SAM-binding methyltransferase superfamily. RsmB/NOP family.

The protein localises to the cytoplasm. The catalysed reaction is cytidine(1407) in 16S rRNA + S-adenosyl-L-methionine = 5-methylcytidine(1407) in 16S rRNA + S-adenosyl-L-homocysteine + H(+). In terms of biological role, specifically methylates the cytosine at position 1407 (m5C1407) of 16S rRNA. This Vibrio campbellii (strain ATCC BAA-1116) protein is Ribosomal RNA small subunit methyltransferase F.